A 243-amino-acid chain; its full sequence is Phosphoadenosine 5'-phosphosulfate reductase (243 aa).

Catalysis depends on Cys239, which acts as the Nucleophile; cysteine thiosulfonate intermediate.

Belongs to the PAPS reductase family. CysH subfamily.

The protein localises to the cytoplasm. The catalysed reaction is [thioredoxin]-disulfide + sulfite + adenosine 3',5'-bisphosphate + 2 H(+) = [thioredoxin]-dithiol + 3'-phosphoadenylyl sulfate. Its pathway is sulfur metabolism; hydrogen sulfide biosynthesis; sulfite from sulfate: step 3/3. Its function is as follows. Catalyzes the formation of sulfite from phosphoadenosine 5'-phosphosulfate (PAPS) using thioredoxin as an electron donor. This Erwinia tasmaniensis (strain DSM 17950 / CFBP 7177 / CIP 109463 / NCPPB 4357 / Et1/99) protein is Phosphoadenosine 5'-phosphosulfate reductase.